We begin with the raw amino-acid sequence, 281 residues long: Pantothenate synthetase (281 aa).

An ATP-binding site is contributed by 26–33; it reads MGSLHEGH. Catalysis depends on His33, which acts as the Proton donor. Gln57 contacts (R)-pantoate. Gln57 is a binding site for beta-alanine. 144–147 lines the ATP pocket; the sequence is GKKD. Gln150 serves as a coordination point for (R)-pantoate. ATP-binding positions include Ala173 and 181–184; that span reads LSSR.

This sequence belongs to the pantothenate synthetase family. In terms of assembly, homodimer.

The protein resides in the cytoplasm. The enzyme catalyses (R)-pantoate + beta-alanine + ATP = (R)-pantothenate + AMP + diphosphate + H(+). Its pathway is cofactor biosynthesis; (R)-pantothenate biosynthesis; (R)-pantothenate from (R)-pantoate and beta-alanine: step 1/1. Functionally, catalyzes the condensation of pantoate with beta-alanine in an ATP-dependent reaction via a pantoyl-adenylate intermediate. This chain is Pantothenate synthetase, found in Methylibium petroleiphilum (strain ATCC BAA-1232 / LMG 22953 / PM1).